We begin with the raw amino-acid sequence, 252 residues long: Hydroxyacylglutathione hydrolase (252 aa).

7 residues coordinate Zn(2+): His-54, His-56, Asp-58, His-59, His-111, Asp-128, and His-166.

It belongs to the metallo-beta-lactamase superfamily. Glyoxalase II family. In terms of assembly, monomer. Zn(2+) serves as cofactor.

The enzyme catalyses an S-(2-hydroxyacyl)glutathione + H2O = a 2-hydroxy carboxylate + glutathione + H(+). It participates in secondary metabolite metabolism; methylglyoxal degradation; (R)-lactate from methylglyoxal: step 2/2. In terms of biological role, thiolesterase that catalyzes the hydrolysis of S-D-lactoyl-glutathione to form glutathione and D-lactic acid. The polypeptide is Hydroxyacylglutathione hydrolase (Vibrio cholerae serotype O1 (strain ATCC 39541 / Classical Ogawa 395 / O395)).